The primary structure comprises 213 residues: Ribosomal RNA small subunit methyltransferase G (213 aa).

S-adenosyl-L-methionine is bound by residues glycine 75, phenylalanine 80, 128–129, and arginine 144; that span reads IE.

This sequence belongs to the methyltransferase superfamily. RNA methyltransferase RsmG family.

Its subcellular location is the cytoplasm. It catalyses the reaction guanosine(527) in 16S rRNA + S-adenosyl-L-methionine = N(7)-methylguanosine(527) in 16S rRNA + S-adenosyl-L-homocysteine. Functionally, specifically methylates the N7 position of guanine in position 527 of 16S rRNA. This Brucella suis biovar 1 (strain 1330) protein is Ribosomal RNA small subunit methyltransferase G.